A 325-amino-acid polypeptide reads, in one-letter code: tRNA (guanine-N(7)-)-methyltransferase (325 aa).

The tract at residues 1-101 (MSEATDKQKQ…LEYPKSPESM (101 aa)) is disordered. A compositionally biased stretch (polar residues) spans 51 to 69 (VSTTPEPEQSDSSATTATI). S-adenosyl-L-methionine contacts are provided by residues Gly-122, 145–146 (EI), 199–200 (NA), and Cys-219. The active site involves Asp-222. An S-adenosyl-L-methionine-binding site is contributed by 297-299 (TEE).

Belongs to the class I-like SAM-binding methyltransferase superfamily. TrmB family. In terms of assembly, forms a complex with TRM82.

It is found in the nucleus. It carries out the reaction guanosine(46) in tRNA + S-adenosyl-L-methionine = N(7)-methylguanosine(46) in tRNA + S-adenosyl-L-homocysteine. Its pathway is tRNA modification; N(7)-methylguanine-tRNA biosynthesis. Functionally, catalyzes the formation of N(7)-methylguanine at position 46 (m7G46) in tRNA. The chain is tRNA (guanine-N(7)-)-methyltransferase from Candida albicans (strain SC5314 / ATCC MYA-2876) (Yeast).